The primary structure comprises 142 residues: Transcription antitermination protein NusB (142 aa).

The protein belongs to the NusB family.

Its function is as follows. Involved in transcription antitermination. Required for transcription of ribosomal RNA (rRNA) genes. Binds specifically to the boxA antiterminator sequence of the ribosomal RNA (rrn) operons. The polypeptide is Transcription antitermination protein NusB (Streptococcus mutans serotype c (strain ATCC 700610 / UA159)).